The chain runs to 92 residues: Small ribosomal subunit protein uS19 (92 aa).

This sequence belongs to the universal ribosomal protein uS19 family.

Its function is as follows. Protein S19 forms a complex with S13 that binds strongly to the 16S ribosomal RNA. This Buchnera aphidicola subsp. Acyrthosiphon pisum (strain 5A) protein is Small ribosomal subunit protein uS19.